The following is a 367-amino-acid chain: Calcium uniporter protein, mitochondrial (367 aa).

The N-terminal 12 residues, 1–12, are a transit peptide targeting the mitochondrion; sequence MAMPRVLCRVRL. At 13–232 the chain is on the mitochondrial matrix side; sequence LIHNDFSVIS…LEEKKLELEQ (220 aa). Residues 61-80 form a disordered region; the sequence is KQDASSSSSDSDSSDSDEDD. The stretch at 199–233 forms a coiled coil; it reads REHQLQKEVELTTQLETLQQELLPLEEKKLELEQV. A helical transmembrane segment spans residues 233 to 253; the sequence is VANRRSNWMAWAGLGLMSVQF. The Mitochondrial intermembrane portion of the chain corresponds to 254–262; sequence GILARLTWW. Residues 263-284 form a helical membrane-spanning segment; it reads EYSWDIMEPVTYFVTYGTAMAA. Residues 266–276 carry the Selectivity filter motif; sequence WDIMEPVTYFV. Glu-270 contacts Ca(2+). Residues 285–367 are Mitochondrial matrix-facing; it reads YAYFVLTREE…KKQVEEKAKE (83 aa).

This sequence belongs to the MCU (TC 1.A.77) family. Homotetramer. Component of the uniplex complex, composed of MCU, EMRE, MICU1 and MICU2 in a 4:4:1:1 stoichiometry.

It localises to the mitochondrion inner membrane. It catalyses the reaction Ca(2+)(in) = Ca(2+)(out). With respect to regulation, MCU channel activity is regulated by the heterodimer composed of MICU1 and MICU2, which act as calcium-sensors. At low calcium levels, MICU1 occludes the pore of the MCU channel, preventing mitochondrial calcium uptake. At higher calcium levels, calcium-binding to MICU1 and MICU2 induces a conformational change that weakens MCU-MICU1 interactions and moves the MICU1-MICU2 heterodimer away from the pore, allowing calcium permeation through the channel. Functionally, channel-forming and calcium-conducting subunit of the mitochondrial inner membrane calcium uniporter complex (uniplex), which mediates calcium uptake into the mitochondrial matrix. MCU channel activity is regulated by the calcium-sensor subunits of the uniplex MICU1 and MICU2. Mitochondrial calcium homeostasis plays key roles in cellular physiology and regulates ATP production, cytoplasmic calcium signals and activation of cell death pathways. This Tribolium castaneum (Red flour beetle) protein is Calcium uniporter protein, mitochondrial.